A 130-amino-acid chain; its full sequence is Small ribosomal subunit protein uS9 (130 aa).

Belongs to the universal ribosomal protein uS9 family.

The chain is Small ribosomal subunit protein uS9 from Variovorax paradoxus (strain S110).